The sequence spans 245 residues: 1-(5-phosphoribosyl)-5-[(5-phosphoribosylamino)methylideneamino] imidazole-4-carboxamide isomerase (245 aa).

The Proton acceptor role is filled by Asp-8. Asp-130 functions as the Proton donor in the catalytic mechanism.

The protein belongs to the HisA/HisF family.

The protein resides in the cytoplasm. The enzyme catalyses 1-(5-phospho-beta-D-ribosyl)-5-[(5-phospho-beta-D-ribosylamino)methylideneamino]imidazole-4-carboxamide = 5-[(5-phospho-1-deoxy-D-ribulos-1-ylimino)methylamino]-1-(5-phospho-beta-D-ribosyl)imidazole-4-carboxamide. It participates in amino-acid biosynthesis; L-histidine biosynthesis; L-histidine from 5-phospho-alpha-D-ribose 1-diphosphate: step 4/9. This is 1-(5-phosphoribosyl)-5-[(5-phosphoribosylamino)methylideneamino] imidazole-4-carboxamide isomerase from Marinobacter nauticus (strain ATCC 700491 / DSM 11845 / VT8) (Marinobacter aquaeolei).